Reading from the N-terminus, the 188-residue chain is Tumor necrosis factor alpha-induced protein 8-like protein (188 aa).

The protein belongs to the TNFAIP8 family.

The polypeptide is Tumor necrosis factor alpha-induced protein 8-like protein (Drosophila pseudoobscura pseudoobscura (Fruit fly)).